The chain runs to 130 residues: Small ribosomal subunit protein uS9 (130 aa).

The protein belongs to the universal ribosomal protein uS9 family.

This chain is Small ribosomal subunit protein uS9, found in Shewanella sediminis (strain HAW-EB3).